Consider the following 122-residue polypeptide: Large ribosomal subunit protein uL14 (122 aa).

This sequence belongs to the universal ribosomal protein uL14 family. In terms of assembly, part of the 50S ribosomal subunit. Forms a cluster with proteins L3 and L19. In the 70S ribosome, L14 and L19 interact and together make contacts with the 16S rRNA in bridges B5 and B8.

Its function is as follows. Binds to 23S rRNA. Forms part of two intersubunit bridges in the 70S ribosome. In Polynucleobacter necessarius subsp. necessarius (strain STIR1), this protein is Large ribosomal subunit protein uL14.